A 149-amino-acid polypeptide reads, in one-letter code: Small ribosomal subunit protein uS13 (149 aa).

The tract at residues Gly-118–Arg-149 is disordered.

The protein belongs to the universal ribosomal protein uS13 family. In terms of assembly, part of the 30S ribosomal subunit. Forms a loose heterodimer with protein S19. Forms two bridges to the 50S subunit in the 70S ribosome.

Located at the top of the head of the 30S subunit, it contacts several helices of the 16S rRNA. In the 70S ribosome it contacts the 23S rRNA (bridge B1a) and protein L5 of the 50S subunit (bridge B1b), connecting the 2 subunits; these bridges are implicated in subunit movement. In Methanothermobacter thermautotrophicus (strain ATCC 29096 / DSM 1053 / JCM 10044 / NBRC 100330 / Delta H) (Methanobacterium thermoautotrophicum), this protein is Small ribosomal subunit protein uS13.